Here is a 220-residue protein sequence, read N- to C-terminus: Cytidylate kinase (220 aa).

G9–T17 lines the ATP pocket.

The protein belongs to the cytidylate kinase family. Type 1 subfamily.

It is found in the cytoplasm. It carries out the reaction CMP + ATP = CDP + ADP. The enzyme catalyses dCMP + ATP = dCDP + ADP. This chain is Cytidylate kinase, found in Thermotoga sp. (strain RQ2).